The chain runs to 35 residues: Natriuretic peptide TNPa (35 aa).

A disulfide bond links Cys-9 and Cys-25.

Expressed by the venom gland.

The protein localises to the secreted. Its function is as follows. Snake venom natriuretic peptide that exhibits vasoactive and probable hypotensive activity. Is only weakly active on natriuretic peptide receptor-C (NPR3). Stimulates cGMP production through the natriuretic peptide receptor 1 (NPR1) with moderate potencies for the rat NPR1 (EC(50)=2020 nM), and very weak potencies over human NPR1 (15% activation at 10 uM). In vivo, does not impact systolic and diastolic blood pressure, as well as heart rate, when intravenously injected in conscious rabbits. Does not affect the bradycardia due to cardiac afferent stimulation (Bezold-Jarisch reflex). The sequence is that of Natriuretic peptide TNPa from Oxyuranus microlepidotus (Inland taipan).